We begin with the raw amino-acid sequence, 161 residues long: Cyclic pyranopterin monophosphate synthase (161 aa).

Residues 75–77 (MCH) and 115–116 (ME) each bind substrate. Residue D130 is part of the active site.

The protein belongs to the MoaC family. As to quaternary structure, homohexamer; trimer of dimers.

It catalyses the reaction (8S)-3',8-cyclo-7,8-dihydroguanosine 5'-triphosphate = cyclic pyranopterin phosphate + diphosphate. It functions in the pathway cofactor biosynthesis; molybdopterin biosynthesis. Functionally, catalyzes the conversion of (8S)-3',8-cyclo-7,8-dihydroguanosine 5'-triphosphate to cyclic pyranopterin monophosphate (cPMP). The protein is Cyclic pyranopterin monophosphate synthase of Bacillus mycoides (strain KBAB4) (Bacillus weihenstephanensis).